The following is a 137-amino-acid chain: Glutamate mutase sigma subunit (137 aa).

The B12-binding domain maps to Lys-3–Lys-137. Adenosylcob(III)alamin is bound by residues Ser-13 to Ala-17, His-16, Ser-61 to Leu-63, and Asn-93 to Gly-97.

The protein belongs to the methylaspartate mutase GlmS subunit family. Heterotetramer composed of 2 epsilon subunits (GlmE) and 2 sigma subunits (GlmS). GlmE exists as a homodimer and GlmS as a monomer. Requires adenosylcob(III)alamin as cofactor.

It catalyses the reaction (2S,3S)-3-methyl-L-aspartate = L-glutamate. It participates in amino-acid degradation; L-glutamate degradation via mesaconate pathway; acetate and pyruvate from L-glutamate: step 1/4. Functionally, catalyzes the carbon skeleton rearrangement of L-glutamate to L-threo-3-methylaspartate ((2S,3S)-3-methylaspartate). The polypeptide is Glutamate mutase sigma subunit (Clostridium tetani (strain Massachusetts / E88)).